Reading from the N-terminus, the 244-residue chain is uncharacterized protein (244 aa).

Positions 5–244 constitute a GP-PDE domain; it reads QLLLAHRGYS…ANKKFEIKIN (240 aa).

The protein to glycerophosphoryl diester phosphodiesterases (EC 3.1.4.46). To M.genitalium MG385.

This is an uncharacterized protein from Mycoplasma genitalium (strain ATCC 33530 / DSM 19775 / NCTC 10195 / G37) (Mycoplasmoides genitalium).